The chain runs to 314 residues: Regulator of microtubule dynamics protein 1 (314 aa).

At K165 the chain carries N6-succinyllysine. TPR repeat units lie at residues 168 to 204 (AICL…NPKD) and 222 to 258 (PWYQ…DPNF).

This sequence belongs to the RMDN family. As to quaternary structure, interacts with microtubules.

Its subcellular location is the cytoplasm. The protein localises to the cytoskeleton. The protein resides in the spindle. It is found in the spindle pole. The protein is Regulator of microtubule dynamics protein 1 (RMDN1) of Homo sapiens (Human).